Reading from the N-terminus, the 89-residue chain is Small ribosomal subunit protein uS14 (89 aa).

It belongs to the universal ribosomal protein uS14 family. In terms of assembly, part of the 30S ribosomal subunit. Contacts proteins S3 and S10.

Functionally, binds 16S rRNA, required for the assembly of 30S particles and may also be responsible for determining the conformation of the 16S rRNA at the A site. The sequence is that of Small ribosomal subunit protein uS14 from Phytoplasma australiense.